The primary structure comprises 389 residues: Sulfate adenylyltransferase (389 aa).

This sequence belongs to the sulfate adenylyltransferase family.

It carries out the reaction sulfate + ATP + H(+) = adenosine 5'-phosphosulfate + diphosphate. Its pathway is sulfur metabolism; hydrogen sulfide biosynthesis; sulfite from sulfate: step 1/3. This chain is Sulfate adenylyltransferase, found in Desulforamulus reducens (strain ATCC BAA-1160 / DSM 100696 / MI-1) (Desulfotomaculum reducens).